We begin with the raw amino-acid sequence, 349 residues long: MATITLKDVHKTYHGDIAAIRGVSLAIADGEFIVLVGPSGCGKSTLLRMIAGLESITSGEISIGDRVVNGLEPSERDIAMVFQNYALYPHMTVRQNLSYGLKNRNTPKEEIERRIAKAAKSLEIEPFLDRKPRQLSGGQRQRVAMGRAIVREPAAFLFDEPLSNLDAKLRVQMRVEIKRLQRALGTTSVYVTHDQLEAMTLADRLVVLNGGRIEQVGTPIELYENPATAFVATFIGSPSMNLLDLNTGNAAWSAPAALVGKPGLATIGIRPEDITLAGDTDGGERFRARVRVGAVELVGAESYVHGTLANGEPLVFRVAGRSRMMIDEEVEVAAVAGSLHWFDAAGRRL.

In terms of domain architecture, ABC transporter spans 4-235 (ITLKDVHKTY…PATAFVATFI (232 aa)). Position 37–44 (37–44 (GPSGCGKS)) interacts with ATP.

This sequence belongs to the ABC transporter superfamily. sn-glycerol-3-phosphate importer (TC 3.A.1.1.3) family. In terms of assembly, the complex is composed of two ATP-binding proteins (UgpC), two transmembrane proteins (UgpA and UgpE) and a solute-binding protein (UgpB).

Its subcellular location is the cell inner membrane. The catalysed reaction is sn-glycerol 3-phosphate(out) + ATP + H2O = sn-glycerol 3-phosphate(in) + ADP + phosphate + H(+). Its function is as follows. Part of the ABC transporter complex UgpBAEC involved in sn-glycerol-3-phosphate (G3P) import. Responsible for energy coupling to the transport system. This chain is sn-glycerol-3-phosphate import ATP-binding protein UgpC, found in Rhizobium meliloti (strain 1021) (Ensifer meliloti).